A 188-amino-acid polypeptide reads, in one-letter code: Peptidyl-tRNA hydrolase (188 aa).

Y15 lines the tRNA pocket. H20 acts as the Proton acceptor in catalysis. TRNA-binding residues include F66, N68, and N114.

The protein belongs to the PTH family. In terms of assembly, monomer.

It is found in the cytoplasm. The enzyme catalyses an N-acyl-L-alpha-aminoacyl-tRNA + H2O = an N-acyl-L-amino acid + a tRNA + H(+). Functionally, hydrolyzes ribosome-free peptidyl-tRNAs (with 1 or more amino acids incorporated), which drop off the ribosome during protein synthesis, or as a result of ribosome stalling. Its function is as follows. Catalyzes the release of premature peptidyl moieties from peptidyl-tRNA molecules trapped in stalled 50S ribosomal subunits, and thus maintains levels of free tRNAs and 50S ribosomes. The sequence is that of Peptidyl-tRNA hydrolase from Lactococcus lactis subsp. cremoris (strain MG1363).